Reading from the N-terminus, the 166-residue chain is MSKVLEQKQQVVAEVAAKLRDSKSTVIVDYRGLNVAQVTELRKQLREAGVEYKVYKNTLVRRATAEAGLTGLDEHLVGPTAIAFGVDDVIAPAKVLNEFAKNNEALTIKTGVIEGNISTADEVKALAELPSREGLLSMLANVLQAPVRQFALAAKAVAEQKEEQGA.

It belongs to the universal ribosomal protein uL10 family. In terms of assembly, part of the ribosomal stalk of the 50S ribosomal subunit. The N-terminus interacts with L11 and the large rRNA to form the base of the stalk. The C-terminus forms an elongated spine to which L12 dimers bind in a sequential fashion forming a multimeric L10(L12)X complex.

Its function is as follows. Forms part of the ribosomal stalk, playing a central role in the interaction of the ribosome with GTP-bound translation factors. This is Large ribosomal subunit protein uL10 from Shouchella clausii (strain KSM-K16) (Alkalihalobacillus clausii).